The primary structure comprises 243 residues: 3-deoxy-manno-octulosonate cytidylyltransferase (243 aa).

This sequence belongs to the KdsB family.

The protein localises to the cytoplasm. The enzyme catalyses 3-deoxy-alpha-D-manno-oct-2-ulosonate + CTP = CMP-3-deoxy-beta-D-manno-octulosonate + diphosphate. Its pathway is nucleotide-sugar biosynthesis; CMP-3-deoxy-D-manno-octulosonate biosynthesis; CMP-3-deoxy-D-manno-octulosonate from 3-deoxy-D-manno-octulosonate and CTP: step 1/1. Activates KDO (a required 8-carbon sugar) for incorporation into bacterial lipopolysaccharide in Gram-negative bacteria. This Wigglesworthia glossinidia brevipalpis protein is 3-deoxy-manno-octulosonate cytidylyltransferase.